A 349-amino-acid chain; its full sequence is Isopentenyl-diphosphate delta-isomerase (349 aa).

Position 12-13 (12-13 (RK)) interacts with substrate. Residues Ser-69, 70-72 (SMT), Ser-101, and Asn-129 each bind FMN. Residue 101-103 (SQR) participates in substrate binding. Gln-164 serves as a coordination point for substrate. Residue Glu-165 coordinates Mg(2+). FMN is bound by residues Lys-196, Thr-226, 279 to 281 (GIR), and 300 to 301 (AA).

Belongs to the IPP isomerase type 2 family. In terms of assembly, homooctamer. Dimer of tetramers. Requires FMN as cofactor. NADPH is required as a cofactor. Mg(2+) serves as cofactor.

It is found in the cytoplasm. The enzyme catalyses isopentenyl diphosphate = dimethylallyl diphosphate. Involved in the biosynthesis of isoprenoids. Catalyzes the 1,3-allylic rearrangement of the homoallylic substrate isopentenyl (IPP) to its allylic isomer, dimethylallyl diphosphate (DMAPP). The polypeptide is Isopentenyl-diphosphate delta-isomerase (Paracoccus zeaxanthinifaciens).